A 138-amino-acid chain; its full sequence is Cysteine desulfuration protein SufE (138 aa).

The active-site Cysteine persulfide intermediate is Cys-51.

The protein belongs to the SufE family. Homodimer. Interacts with SufS.

It localises to the cytoplasm. It functions in the pathway cofactor biosynthesis; iron-sulfur cluster biosynthesis. Functionally, participates in cysteine desulfuration mediated by SufS. Cysteine desulfuration mobilizes sulfur from L-cysteine to yield L-alanine and constitutes an essential step in sulfur metabolism for biosynthesis of a variety of sulfur-containing biomolecules. Functions as a sulfur acceptor for SufS, by mediating the direct transfer of the sulfur atom from the S-sulfanylcysteine of SufS, an intermediate product of cysteine desulfuration process. The sequence is that of Cysteine desulfuration protein SufE from Citrobacter koseri (strain ATCC BAA-895 / CDC 4225-83 / SGSC4696).